The sequence spans 256 residues: Glucanase inhibitor protein 2 (256 aa).

A signal peptide spans 1-15; the sequence is MKLISTIAAATTAFG. The region spanning 27-254 is the Peptidase S1 domain; sequence IFGGGIIPSG…ATEWINSVTK (228 aa). Cysteines 54 and 70 form a disulfide. 4 N-linked (GlcNAc...) asparagine glycosylation sites follow: Asn87, Asn102, Asn107, and Asn157. Intrachain disulfides connect Cys177/Cys189 and Cys199/Cys230.

The protein belongs to the peptidase S1 family. In terms of assembly, forms an apoplastic complex with host endoglucanases in tomato leaves during P.infestans infection.

It is found in the secreted. Its function is as follows. Secreted effector that suppresses host plant glucan elicitor-mediated defense responses. Targets host endoglucanases and inhibits the endoglucanase-mediated release of elicitor-active glucan oligosaccharides from P.infestans cell walls. In Phytophthora infestans (Potato late blight agent), this protein is Glucanase inhibitor protein 2.